Here is a 255-residue protein sequence, read N- to C-terminus: Undecaprenyl-diphosphatase (255 aa).

The next 6 membrane-spanning stretches (helical) occupy residues 1-21 (MDIIQVIVLSIIEGITEFLPI), 75-95 (IIISFIPVGIMGLLFHKIVYQ), 96-116 (LFTVQIVATAFIVGGIIFLIV), 174-194 (TEFSFLGALPVMLAASLFDIV), 203-223 (GDISNLVVGFIVSFFMALITI), and 234-254 (NFVPFGIYRILFGVILLMFFV).

Belongs to the UppP family.

It is found in the cell membrane. It carries out the reaction di-trans,octa-cis-undecaprenyl diphosphate + H2O = di-trans,octa-cis-undecaprenyl phosphate + phosphate + H(+). Functionally, catalyzes the dephosphorylation of undecaprenyl diphosphate (UPP). This Methanococcus aeolicus (strain ATCC BAA-1280 / DSM 17508 / OCM 812 / Nankai-3) protein is Undecaprenyl-diphosphatase.